A 178-amino-acid chain; its full sequence is Small ribosomal subunit protein bS16 (178 aa).

The segment at 78–178 (KLGITQWTAG…AAPAEGEEQA (101 aa)) is disordered. A compositionally biased stretch (basic and acidic residues) spans 91 to 113 (KKGEPGQKAKERAEERAQREADR). The segment covering 114-127 (AAAAAEAAAAPAEE) has biased composition (low complexity). Over residues 128–139 (APAEEAPAEEAA) the composition is skewed to acidic residues. The span at 140-172 (AEAAPEAAAAEEAPAAEAAAEEAAPAAEEAAPA) shows a compositional bias: low complexity.

Belongs to the bacterial ribosomal protein bS16 family.

In Phenylobacterium zucineum (strain HLK1), this protein is Small ribosomal subunit protein bS16.